The following is a 30-amino-acid chain: NADH-ubiquinone oxidoreductase chain 5 (30 aa).

Residues 7-27 form a helical membrane-spanning segment; sequence NIIIIINSSLIIILFSSIFFF.

Belongs to the complex I subunit 5 family.

Its subcellular location is the mitochondrion inner membrane. It catalyses the reaction a ubiquinone + NADH + 5 H(+)(in) = a ubiquinol + NAD(+) + 4 H(+)(out). Its function is as follows. Core subunit of the mitochondrial membrane respiratory chain NADH dehydrogenase (Complex I) that is believed to belong to the minimal assembly required for catalysis. Complex I functions in the transfer of electrons from NADH to the respiratory chain. The immediate electron acceptor for the enzyme is believed to be ubiquinone. In Pisaster ochraceus (Ochre sea star), this protein is NADH-ubiquinone oxidoreductase chain 5 (ND5).